The chain runs to 426 residues: Histidine--tRNA ligase (426 aa).

Belongs to the class-II aminoacyl-tRNA synthetase family. In terms of assembly, homodimer.

The protein localises to the cytoplasm. The enzyme catalyses tRNA(His) + L-histidine + ATP = L-histidyl-tRNA(His) + AMP + diphosphate + H(+). This Chlorobium phaeovibrioides (strain DSM 265 / 1930) (Prosthecochloris vibrioformis (strain DSM 265)) protein is Histidine--tRNA ligase.